The chain runs to 248 residues: 3-oxoacyl-[acyl-carrier-protein] reductase FabG (248 aa).

Residues 14-17 (GSTR), Thr-39, 65-66 (NL), and Asn-92 each bind NADP(+). Residue Ser-144 coordinates substrate. The active-site Proton acceptor is Tyr-157. NADP(+) is bound by residues 157–161 (YSTTK) and Ile-190.

It belongs to the short-chain dehydrogenases/reductases (SDR) family. As to quaternary structure, homotetramer.

The catalysed reaction is a (3R)-hydroxyacyl-[ACP] + NADP(+) = a 3-oxoacyl-[ACP] + NADPH + H(+). The protein operates within lipid metabolism; fatty acid biosynthesis. In terms of biological role, catalyzes the NADPH-dependent reduction of beta-ketoacyl-ACP substrates to beta-hydroxyacyl-ACP products, the first reductive step in the elongation cycle of fatty acid biosynthesis. The sequence is that of 3-oxoacyl-[acyl-carrier-protein] reductase FabG (fabG) from Aquifex aeolicus (strain VF5).